A 270-amino-acid polypeptide reads, in one-letter code: Ribonuclease HII (270 aa).

Residues arginine 28–arginine 222 form the RNase H type-2 domain. A divalent metal cation is bound by residues aspartate 34, glutamate 35, and aspartate 128.

It belongs to the RNase HII family. Mn(2+) is required as a cofactor. The cofactor is Mg(2+).

Its subcellular location is the cytoplasm. It carries out the reaction Endonucleolytic cleavage to 5'-phosphomonoester.. Endonuclease that specifically degrades the RNA of RNA-DNA hybrids. This is Ribonuclease HII from Salinispora tropica (strain ATCC BAA-916 / DSM 44818 / JCM 13857 / NBRC 105044 / CNB-440).